We begin with the raw amino-acid sequence, 455 residues long: MLTCNDCSTWEQFVNYIKTRCSKTAFENWIAPIQVLEESREKIRLEIPNIFVQSYLLDNYKKDLCSFVPLDAEGNPALEFVVSEIKRSSPQIAASVTKPAVEVSEENKDFQLKLNGAYRFDNFIEGPSNQFVKSAALGIAARPGRSYNPLFIHGGVGLGKTHLLHAVGHYVREHHKNLRIHCITTEAFINDLVHHLRVKSIDKMKNFYRSLDLLLVDDIQFLQNRQNFEEEFCNTFETLIHLSKQIVVTSDKPPGQLKLSERIIARMEWGLVAHVGVPDLETRVAILQHKAEQKGLNIPNEIAFYIADHVYGNVRQLEGAINKLTAYCLLFNKPLTETTVRDTLKELFRTPSKQKVSVESILKSVATVFQVKIQDLKGTSRAKNVPLARQVAMYLAKTLITDSLVAIGAAFGKTHSTVLYACKTIEQKIEKDALLKNQISLCKNNIAIDSPQHFV.

The interval 1–95 (MLTCNDCSTW…KRSSPQIAAS (95 aa)) is domain I, interacts with DnaA modulators. Residues 96–112 (VTKPAVEVSEENKDFQL) form a domain II region. Residues 113–328 (KLNGAYRFDN…GAINKLTAYC (216 aa)) form a domain III, AAA+ region region. Residues Gly-157, Gly-159, Lys-160, and Thr-161 each coordinate ATP. The interval 329-455 (LLFNKPLTET…IAIDSPQHFV (127 aa)) is domain IV, binds dsDNA.

The protein belongs to the DnaA family. Oligomerizes as a right-handed, spiral filament on DNA at oriC.

It localises to the cytoplasm. Plays an essential role in the initiation and regulation of chromosomal replication. ATP-DnaA binds to the origin of replication (oriC) to initiate formation of the DNA replication initiation complex once per cell cycle. Binds the DnaA box (a 9 base pair repeat at the origin) and separates the double-stranded (ds)DNA. Forms a right-handed helical filament on oriC DNA; dsDNA binds to the exterior of the filament while single-stranded (ss)DNA is stabiized in the filament's interior. The ATP-DnaA-oriC complex binds and stabilizes one strand of the AT-rich DNA unwinding element (DUE), permitting loading of DNA polymerase. After initiation quickly degrades to an ADP-DnaA complex that is not apt for DNA replication. Binds acidic phospholipids. This Chlamydia muridarum (strain MoPn / Nigg) protein is Chromosomal replication initiator protein DnaA 2.